Reading from the N-terminus, the 320-residue chain is Nucleotide-binding protein Pcryo_0127 (320 aa).

32 to 39 contacts ATP; that stretch reads GRSGSGKT. 82-85 serves as a coordination point for GTP; that stretch reads DIRT.

Belongs to the RapZ-like family.

Its function is as follows. Displays ATPase and GTPase activities. The protein is Nucleotide-binding protein Pcryo_0127 of Psychrobacter cryohalolentis (strain ATCC BAA-1226 / DSM 17306 / VKM B-2378 / K5).